The primary structure comprises 227 residues: Fibrillarin-like rRNA/tRNA 2'-O-methyltransferase (227 aa).

S-adenosyl-L-methionine is bound by residues 82-83 (TT), 100-101 (EF), 125-126 (DA), and 145-148 (DVAQ).

This sequence belongs to the methyltransferase superfamily. Fibrillarin family. Interacts with nop5. Component of box C/D small ribonucleoprotein (sRNP) particles that contain rpl7ae, FlpA and nop5, plus a guide RNA.

Involved in pre-rRNA and tRNA processing. Utilizes the methyl donor S-adenosyl-L-methionine to catalyze the site-specific 2'-hydroxyl methylation of ribose moieties in rRNA and tRNA. Site specificity is provided by a guide RNA that base pairs with the substrate. Methylation occurs at a characteristic distance from the sequence involved in base pairing with the guide RNA. In Methanosarcina mazei (strain ATCC BAA-159 / DSM 3647 / Goe1 / Go1 / JCM 11833 / OCM 88) (Methanosarcina frisia), this protein is Fibrillarin-like rRNA/tRNA 2'-O-methyltransferase.